We begin with the raw amino-acid sequence, 366 residues long: NAD(P)H-quinone oxidoreductase subunit 1, chloroplastic (366 aa).

The next 8 helical transmembrane spans lie at 29–49, 97–117, 130–150, 166–186, 202–222, 254–274, 307–327, and 340–360; these read WITA…LVIV, LLFS…YLVI, IGVF…FMAG, VAQA…ISLL, FGFW…FLIA, FGLF…FVTV, VIIG…ISIV, and LLNL…LLTA.

This sequence belongs to the complex I subunit 1 family. As to quaternary structure, NDH is composed of at least 16 different subunits, 5 of which are encoded in the nucleus.

The protein resides in the plastid. It localises to the chloroplast thylakoid membrane. The enzyme catalyses a plastoquinone + NADH + (n+1) H(+)(in) = a plastoquinol + NAD(+) + n H(+)(out). It carries out the reaction a plastoquinone + NADPH + (n+1) H(+)(in) = a plastoquinol + NADP(+) + n H(+)(out). In terms of biological role, NDH shuttles electrons from NAD(P)H:plastoquinone, via FMN and iron-sulfur (Fe-S) centers, to quinones in the photosynthetic chain and possibly in a chloroplast respiratory chain. The immediate electron acceptor for the enzyme in this species is believed to be plastoquinone. Couples the redox reaction to proton translocation, and thus conserves the redox energy in a proton gradient. In Anthoceros angustus (Hornwort), this protein is NAD(P)H-quinone oxidoreductase subunit 1, chloroplastic.